The sequence spans 410 residues: Sprouty-related, EVH1 domain-containing protein 2 (410 aa).

The WH1 domain maps to 5–122 (THPDDDSYIV…RGVRKAIEDL (118 aa)). Positions 127-171 (TTSSSTLHNEAELGDDDVFTTATDSSSNSSQKREPTTRTISSPTS) are disordered. Polar residues predominate over residues 146 to 156 (TTATDSSSNSS). Positions 197 to 252 (SYPQVTFPEDDEEIVRINPREKIWMTGYEDYRHAPVRGKYLDTTEDADSYVRFAKG) constitute a KBD domain. 2 positions are modified to phosphotyrosine: Y224 and Y227. Residues 274-294 (DPKGSVIKTQPPRAKSRRRKE) are disordered. An SPR domain is found at 300–408 (RCVYCRDMFN…CRCCGGKHKA (109 aa)).

As to quaternary structure, homodimer and heterodimer. Able to interact with SPRED1 to form heterodimers. Interacts with RAS. May interact with ZDHHC13 (via ANK repeats) and ZDHHC17 (via ANK repeats). Interacts with TESK1. Interacts with NF1. Post-translationally, phosphorylated on serine and threonine residues. Phosphorylated on tyrosine. Phosphorylation of Tyr-224 and Tyr-227 are required for ubiquitination. In terms of processing, ubiquitinated; leading to degradation by the proteasome. Predominantly expressed in lung, liver and testis. In testis, it is specially found in mature spermatids projecting into the lumen of the seminiferous. Strongly expressed in glandular epithelia. Also expressed in embryonic tissues such as heart, lung, liver and brain.

It localises to the cell membrane. Its subcellular location is the cytoplasmic vesicle. The protein resides in the secretory vesicle membrane. It is found in the cytoplasm. Its function is as follows. Negatively regulates Ras signaling pathways and downstream activation of MAP kinases. Recruits and translocates NF1 to the cell membrane, thereby enabling NF1-dependent hydrolysis of active GTP-bound Ras to inactive GDP-bound Ras. Inhibits fibroblast growth factor (FGF)-induced retinal lens fiber differentiation, probably by inhibiting FGF-mediated phosphorylation of ERK1/2. Inhibits TGFB-induced epithelial-to-mesenchymal transition in lens epithelial cells. In Mus musculus (Mouse), this protein is Sprouty-related, EVH1 domain-containing protein 2 (Spred2).